The primary structure comprises 311 residues: tRNA dimethylallyltransferase (311 aa).

Residue 9-16 (GPTAVGKT) participates in ATP binding. Position 11-16 (11-16 (TAVGKT)) interacts with substrate. The interaction with substrate tRNA stretch occupies residues 34 to 37 (DSMQ).

It belongs to the IPP transferase family. As to quaternary structure, monomer. Mg(2+) serves as cofactor.

The catalysed reaction is adenosine(37) in tRNA + dimethylallyl diphosphate = N(6)-dimethylallyladenosine(37) in tRNA + diphosphate. Functionally, catalyzes the transfer of a dimethylallyl group onto the adenine at position 37 in tRNAs that read codons beginning with uridine, leading to the formation of N6-(dimethylallyl)adenosine (i(6)A). The chain is tRNA dimethylallyltransferase from Clostridium botulinum (strain Langeland / NCTC 10281 / Type F).